A 466-amino-acid polypeptide reads, in one-letter code: Argininosuccinate lyase (466 aa).

The protein belongs to the lyase 1 family. Argininosuccinate lyase subfamily.

The protein localises to the cytoplasm. The catalysed reaction is 2-(N(omega)-L-arginino)succinate = fumarate + L-arginine. It functions in the pathway amino-acid biosynthesis; L-arginine biosynthesis; L-arginine from L-ornithine and carbamoyl phosphate: step 3/3. The chain is Argininosuccinate lyase from Methylocella silvestris (strain DSM 15510 / CIP 108128 / LMG 27833 / NCIMB 13906 / BL2).